A 519-amino-acid chain; its full sequence is 2-isopropylmalate synthase (519 aa).

Positions 5–267 (VKIFDTTLRD…NTNIRSHEIS (263 aa)) constitute a Pyruvate carboxyltransferase domain. Positions 14, 202, 204, and 238 each coordinate Mn(2+). The regulatory domain stretch occupies residues 392–519 (KLLYLQASSG…KKQQTQTAGV (128 aa)).

The protein belongs to the alpha-IPM synthase/homocitrate synthase family. LeuA type 1 subfamily. Homodimer. Requires Mn(2+) as cofactor.

It localises to the cytoplasm. It carries out the reaction 3-methyl-2-oxobutanoate + acetyl-CoA + H2O = (2S)-2-isopropylmalate + CoA + H(+). The protein operates within amino-acid biosynthesis; L-leucine biosynthesis; L-leucine from 3-methyl-2-oxobutanoate: step 1/4. Its function is as follows. Catalyzes the condensation of the acetyl group of acetyl-CoA with 3-methyl-2-oxobutanoate (2-ketoisovalerate) to form 3-carboxy-3-hydroxy-4-methylpentanoate (2-isopropylmalate). This is 2-isopropylmalate synthase from Pseudoalteromonas atlantica (strain T6c / ATCC BAA-1087).